The chain runs to 31 residues: Palustrin-2c (31 aa).

Cys-23 and Cys-29 are disulfide-bonded.

In terms of tissue distribution, expressed by the skin glands.

The protein localises to the secreted. Its function is as follows. Antimicrobial activity against Gram-negative bacterium E.coli. The chain is Palustrin-2c from Lithobates palustris (Pickerel frog).